The sequence spans 747 residues: Protein Niban 2 (747 aa).

Residue Gly-2 is the site of N-myristoyl glycine attachment. The PH domain occupies 68-192 (RIIFSGNLFQ…WQAVLQDCVR (125 aa)). Residues Ser-568 and Ser-574 each carry the phosphoserine modification. Residues 589–747 (WGEQYGDGGD…EDSAGVQTEF (159 aa)) are disordered. The span at 593 to 602 (YGDGGDGSDS) shows a compositional bias: gly residues. Phosphoserine is present on residues Ser-605, Ser-626, Ser-641, Ser-645, Ser-648, Ser-667, Ser-672, Ser-683, Ser-693, and Ser-697. Residues 708 to 722 (VDLEPPKPSDQETGE) show a composition bias toward basic and acidic residues. Residues 734 to 747 (HTTTEDSAGVQTEF) show a composition bias toward polar residues.

Belongs to the Niban family. As apoptosis proceeds, degraded via an proteasome-independent pathway, probably by caspases.

The protein resides in the cytoplasm. The protein localises to the cytosol. It localises to the cell junction. It is found in the adherens junction. Its subcellular location is the membrane. Its function is as follows. May play a role in apoptosis suppression. The chain is Protein Niban 2 from Rattus norvegicus (Rat).